The following is a 781-amino-acid chain: Phenylalanine--tRNA ligase beta subunit (781 aa).

Positions 39 to 147 (APPFNDVVVA…DDAPVGEDLR (109 aa)) constitute a tRNA-binding domain. The B5 domain maps to 398-473 (PRREPIELRL…RLFGYDRIPA (76 aa)). Positions 451, 457, 460, and 461 each coordinate Mg(2+). The FDX-ACB domain maps to 687–780 (SRFPQVRRDL…AARRCSATLR (94 aa)).

It belongs to the phenylalanyl-tRNA synthetase beta subunit family. Type 1 subfamily. In terms of assembly, tetramer of two alpha and two beta subunits. Mg(2+) serves as cofactor.

The protein resides in the cytoplasm. The enzyme catalyses tRNA(Phe) + L-phenylalanine + ATP = L-phenylalanyl-tRNA(Phe) + AMP + diphosphate + H(+). In Thiobacillus denitrificans (strain ATCC 25259 / T1), this protein is Phenylalanine--tRNA ligase beta subunit.